The sequence spans 363 residues: MSASSILDLVREDLRAFAGYSSARTSALQGDVWLNANESAWANPADPDASTRRYPDPQPKGLRSALAALYGCAPEQLLIGRGSDEAIDLLVRGLCVPGRDAVLVTPPVFGMYAVCARLQNAPLVDVPLVDGPDGFRADIPAIVARALASNAKLVFLCSPSNPAGSAIALDQIEQALQALQGKALVVVDEAYGEFSDVPSAVGLLGRYDNLAVLRTLSKAHALAAARIGTLIANAELIALLRRCQAPYPVPTPCAAMAEQALSAPALEVTRRRIAEVRSERERVHEALAQLAGVRQVYPSQGNFLLVRFDDAEAAFQALLDAGVVVRDQRAVPRLADALRITLGTHEQNQRVLSALQRTQEAVA.

Position 218 is an N6-(pyridoxal phosphate)lysine (K218).

It belongs to the class-II pyridoxal-phosphate-dependent aminotransferase family. Histidinol-phosphate aminotransferase subfamily. As to quaternary structure, homodimer. Requires pyridoxal 5'-phosphate as cofactor.

The enzyme catalyses L-histidinol phosphate + 2-oxoglutarate = 3-(imidazol-4-yl)-2-oxopropyl phosphate + L-glutamate. It functions in the pathway amino-acid biosynthesis; L-histidine biosynthesis; L-histidine from 5-phospho-alpha-D-ribose 1-diphosphate: step 7/9. This is Histidinol-phosphate aminotransferase from Xanthomonas euvesicatoria pv. vesicatoria (strain 85-10) (Xanthomonas campestris pv. vesicatoria).